The chain runs to 154 residues: Ribonuclease H (154 aa).

The 142-residue stretch at 1–142 folds into the RNase H type-1 domain; it reads MEKTVEIYTD…VDDLARDAAG (142 aa). Residues Asp-10, Glu-48, Asp-70, and Asp-134 each contribute to the Mg(2+) site.

This sequence belongs to the RNase H family. As to quaternary structure, monomer. The cofactor is Mg(2+).

It is found in the cytoplasm. It carries out the reaction Endonucleolytic cleavage to 5'-phosphomonoester.. In terms of biological role, endonuclease that specifically degrades the RNA of RNA-DNA hybrids. In Pseudoalteromonas translucida (strain TAC 125), this protein is Ribonuclease H.